Consider the following 371-residue polypeptide: Chorismate synthase (371 aa).

2 residues coordinate NADP(+): Arg48 and Arg54. Residues 130-132 (RSS), 242-243 (NA), Gly287, 302-306 (KPTSS), and Arg328 each bind FMN.

The protein belongs to the chorismate synthase family. Homotetramer. Requires FMNH2 as cofactor.

It catalyses the reaction 5-O-(1-carboxyvinyl)-3-phosphoshikimate = chorismate + phosphate. It participates in metabolic intermediate biosynthesis; chorismate biosynthesis; chorismate from D-erythrose 4-phosphate and phosphoenolpyruvate: step 7/7. Its function is as follows. Catalyzes the anti-1,4-elimination of the C-3 phosphate and the C-6 proR hydrogen from 5-enolpyruvylshikimate-3-phosphate (EPSP) to yield chorismate, which is the branch point compound that serves as the starting substrate for the three terminal pathways of aromatic amino acid biosynthesis. This reaction introduces a second double bond into the aromatic ring system. The chain is Chorismate synthase from Azorhizobium caulinodans (strain ATCC 43989 / DSM 5975 / JCM 20966 / LMG 6465 / NBRC 14845 / NCIMB 13405 / ORS 571).